We begin with the raw amino-acid sequence, 192 residues long: A-type ATP synthase subunit E (192 aa).

Residues 1 to 66 (MSLDTVVEDI…QERDQKLSSA (66 aa)) form a disordered region. Residues 8–26 (EDIRDEARARADEIRSEGE) are compositionally biased toward basic and acidic residues. A compositionally biased stretch (acidic residues) spans 27-49 (ERAEEIIDEAEREADDIVDEAER). Residues 50–66 (EAERKISQERDQKLSSA) show a composition bias toward basic and acidic residues.

It belongs to the V-ATPase E subunit family. As to quaternary structure, has multiple subunits with at least A(3), B(3), C, D, E, F, H, I and proteolipid K(x).

It is found in the cell membrane. Functionally, component of the A-type ATP synthase that produces ATP from ADP in the presence of a proton gradient across the membrane. This Natronomonas pharaonis (strain ATCC 35678 / DSM 2160 / CIP 103997 / JCM 8858 / NBRC 14720 / NCIMB 2260 / Gabara) (Halobacterium pharaonis) protein is A-type ATP synthase subunit E.